Consider the following 110-residue polypeptide: Putative caspase recruitment domain-containing protein 17P (110 aa).

The CARD domain occupies 1 to 91 (MADKVLKEKR…HLAGTLGLSA (91 aa)).

In terms of assembly, interacts with pro-CASP1. As to expression, ubiquitous.

The protein resides in the cytoplasm. Regulator of procaspase-1/CASP1 activation implicated in the regulation of the proteolytic maturation of pro-IL-1beta/IL1B and its release during inflammation. Inhibits the release of IL1B in response to LPS in monocytes. However, unlike CASP1, do not induce NF-kappa-B activation. In Homo sapiens (Human), this protein is Putative caspase recruitment domain-containing protein 17P (CARD17P).